The chain runs to 971 residues: Nitrogen regulatory protein areA (971 aa).

Disordered stretches follow at residues 39-61 (IHNA…DASA), 146-169 (HKEE…DAGS), 262-307 (QPAH…VNST), 390-416 (SASM…NVST), and 587-691 (DNNG…GNAP). A compositionally biased stretch (polar residues) spans 42–59 (APTQRTXNSNRIPNSRDA). Residues 146–159 (HKEEQQQRQDEADA) show a composition bias toward basic and acidic residues. 2 stretches are compositionally biased toward polar residues: residues 262–274 (QPAH…SEFN) and 297–307 (FSPQVPAVNST). A compositionally biased stretch (low complexity) spans 390 to 400 (SASMSNNNNNS). Composition is skewed to polar residues over residues 597 to 606 (LERSQSQSFR) and 632 to 645 (NGFE…QSSP). Low complexity-rich tracts occupy residues 654–663 (SGFSSVAPSR) and 680–691 (AAAGNGNDGNAP). The GATA-type zinc finger occupies 694-718 (CTNCFTQTTPLWRRNPEGQPLCNAC). Residues 742-918 (NRGSGTNVPV…PFGSSAGLSS (177 aa)) are disordered. Positions 744 to 794 (GSGTNVPVGGSSTRSKKTASTLNSRKNSTLSMSTATANSTKPNSSNPTPRV) are enriched in polar residues. The span at 796 to 826 (TPPATSQPPSSKDVDSPVSGTTSGANTAGST) shows a compositional bias: low complexity. Residues 832–845 (GGPGPSSGAVGGKG) are compositionally biased toward gly residues. Residues 863–875 (SSMSMQRPATASS) are compositionally biased toward polar residues. The span at 892-918 (SMDIDSPDSTSSIDGPRPFGSSAGLSS) shows a compositional bias: low complexity.

The protein localises to the nucleus. Its function is as follows. Major nitrogen regulatory protein. Positively acting regulatory gene of nitrogen metabolite repression. The chain is Nitrogen regulatory protein areA (AREA) from Fusarium fujikuroi (Bakanae and foot rot disease fungus).